An 82-amino-acid polypeptide reads, in one-letter code: Consomatin Ar1 (82 aa).

An N-terminal signal peptide occupies residues 1–22 (MQTAYWVVVMMMMVWVTAPVSE). Residues 23-60 (GGKLSDVIWGLVPDDLTPQIILQILNASRHAYRRVRPR) constitute a propeptide that is removed on maturation. Cysteines 64 and 69 form a disulfide. W66 is subject to D-tryptophan. A 4-hydroxyproline mark is found at P70, P71, and P73. Residues 74–82 (QWIHPLVKR) constitute a propeptide that is removed on maturation.

Belongs to the conotoxin C superfamily. Consomatin family. In terms of tissue distribution, expressed by the venom duct.

The protein resides in the secreted. Functionally, moderately activates human somatostatin receptors (SSTR) with a preferential activation of SSTR1 and SSTR4. In vivo, does not cause behavioral changes in mice within a few minutes of intracranial injection, but causes a progressive loss of movement thereafter. Four to five hours after injection, mice recover, even with the highest dose tested. Shows antinociception and antihyperalgesia activities in two mouse models of acute pain, most probably by acting outside the central nervous system. The chain is Consomatin Ar1 from Conus arenatus (Sand-dusted cone).